The sequence spans 88 residues: Small ribosomal subunit protein bS20 (88 aa).

Residues 1–10 show a composition bias toward basic residues; it reads MANHKSSLKR. Positions 1-24 are disordered; sequence MANHKSSLKRAKQDIVRNTRNKSR.

This sequence belongs to the bacterial ribosomal protein bS20 family.

Functionally, binds directly to 16S ribosomal RNA. The chain is Small ribosomal subunit protein bS20 from Desulfosudis oleivorans (strain DSM 6200 / JCM 39069 / Hxd3) (Desulfococcus oleovorans).